We begin with the raw amino-acid sequence, 372 residues long: 4-hydroxy-3-methylbut-2-en-1-yl diphosphate synthase (flavodoxin) (372 aa).

Residues C270, C273, C305, and E312 each contribute to the [4Fe-4S] cluster site.

It belongs to the IspG family. [4Fe-4S] cluster serves as cofactor.

It catalyses the reaction (2E)-4-hydroxy-3-methylbut-2-enyl diphosphate + oxidized [flavodoxin] + H2O + 2 H(+) = 2-C-methyl-D-erythritol 2,4-cyclic diphosphate + reduced [flavodoxin]. The protein operates within isoprenoid biosynthesis; isopentenyl diphosphate biosynthesis via DXP pathway; isopentenyl diphosphate from 1-deoxy-D-xylulose 5-phosphate: step 5/6. Functionally, converts 2C-methyl-D-erythritol 2,4-cyclodiphosphate (ME-2,4cPP) into 1-hydroxy-2-methyl-2-(E)-butenyl 4-diphosphate. This Pseudoalteromonas translucida (strain TAC 125) protein is 4-hydroxy-3-methylbut-2-en-1-yl diphosphate synthase (flavodoxin).